The sequence spans 314 residues: Small ribosomal subunit biogenesis GTPase RsgA (314 aa).

Residues 78-238 enclose the CP-type G domain; sequence SEIFREKLIA…IIDSPGFQEF (161 aa). GTP is bound by residues 127–130 and 180–188; these read NKID and GQSGVGKST. 4 residues coordinate Zn(2+): cysteine 262, cysteine 267, histidine 269, and cysteine 275.

Belongs to the TRAFAC class YlqF/YawG GTPase family. RsgA subfamily. In terms of assembly, monomer. Associates with 30S ribosomal subunit, binds 16S rRNA. Zn(2+) serves as cofactor.

Its subcellular location is the cytoplasm. Its function is as follows. One of several proteins that assist in the late maturation steps of the functional core of the 30S ribosomal subunit. Helps release RbfA from mature subunits. May play a role in the assembly of ribosomal proteins into the subunit. Circularly permuted GTPase that catalyzes slow GTP hydrolysis, GTPase activity is stimulated by the 30S ribosomal subunit. The chain is Small ribosomal subunit biogenesis GTPase RsgA from Nitrosomonas europaea (strain ATCC 19718 / CIP 103999 / KCTC 2705 / NBRC 14298).